The following is an 89-amino-acid chain: Cell division topological specificity factor (89 aa).

The protein belongs to the MinE family.

In terms of biological role, prevents the cell division inhibition by proteins MinC and MinD at internal division sites while permitting inhibition at polar sites. This ensures cell division at the proper site by restricting the formation of a division septum at the midpoint of the long axis of the cell. The protein is Cell division topological specificity factor of Photorhabdus laumondii subsp. laumondii (strain DSM 15139 / CIP 105565 / TT01) (Photorhabdus luminescens subsp. laumondii).